We begin with the raw amino-acid sequence, 366 residues long: Aminomethyltransferase (366 aa).

The protein belongs to the GcvT family. The glycine cleavage system is composed of four proteins: P, T, L and H.

It carries out the reaction N(6)-[(R)-S(8)-aminomethyldihydrolipoyl]-L-lysyl-[protein] + (6S)-5,6,7,8-tetrahydrofolate = N(6)-[(R)-dihydrolipoyl]-L-lysyl-[protein] + (6R)-5,10-methylene-5,6,7,8-tetrahydrofolate + NH4(+). In terms of biological role, the glycine cleavage system catalyzes the degradation of glycine. This Moorella thermoacetica (strain ATCC 39073 / JCM 9320) protein is Aminomethyltransferase.